A 208-amino-acid polypeptide reads, in one-letter code: Small ribosomal subunit protein uS4 (208 aa).

In terms of domain architecture, S4 RNA-binding spans 98 to 158 (CRLDTVSYRM…EKAKNHLRIK (61 aa)).

Belongs to the universal ribosomal protein uS4 family. Part of the 30S ribosomal subunit. Contacts protein S5. The interaction surface between S4 and S5 is involved in control of translational fidelity.

Functionally, one of the primary rRNA binding proteins, it binds directly to 16S rRNA where it nucleates assembly of the body of the 30S subunit. With S5 and S12 plays an important role in translational accuracy. This chain is Small ribosomal subunit protein uS4, found in Nitrosospira multiformis (strain ATCC 25196 / NCIMB 11849 / C 71).